The sequence spans 81 residues: WAP four-disulfide core domain protein 13 (81 aa).

The signal sequence occupies residues 1–22; the sequence is MRPVSPLQLLLVLSLAPQPVLG. In terms of domain architecture, WAP spans 31-74; sequence YILEPPPCRSEPGACNMFCTQQEECPEPLQCCSAYCGIVCTSNQ. Intrachain disulfides connect cysteine 38-cysteine 62, cysteine 45-cysteine 66, cysteine 49-cysteine 61, and cysteine 55-cysteine 70.

It is found in the secreted. Putative acid-stable proteinase inhibitor. The chain is WAP four-disulfide core domain protein 13 (Wfdc13) from Mus musculus (Mouse).